A 161-amino-acid polypeptide reads, in one-letter code: Phosphopantetheine adenylyltransferase (161 aa).

A substrate-binding site is contributed by Thr11. ATP contacts are provided by residues 11-12 (TF) and His19. The substrate site is built by Lys43, Thr75, and Arg89. ATP-binding positions include 90 to 92 (GLR), Glu100, and 125 to 131 (YSFLSSS).

Belongs to the bacterial CoaD family. In terms of assembly, homohexamer. Mg(2+) is required as a cofactor.

It localises to the cytoplasm. The enzyme catalyses (R)-4'-phosphopantetheine + ATP + H(+) = 3'-dephospho-CoA + diphosphate. It participates in cofactor biosynthesis; coenzyme A biosynthesis; CoA from (R)-pantothenate: step 4/5. In terms of biological role, reversibly transfers an adenylyl group from ATP to 4'-phosphopantetheine, yielding dephospho-CoA (dPCoA) and pyrophosphate. The protein is Phosphopantetheine adenylyltransferase of Listeria innocua serovar 6a (strain ATCC BAA-680 / CLIP 11262).